A 305-amino-acid polypeptide reads, in one-letter code: Pseudouridine-5'-phosphate glycosidase (305 aa).

The Proton donor role is filled by Glu30. Residues Lys91 and Val111 each contribute to the substrate site. Asp143 is a binding site for Mn(2+). 145–147 contributes to the substrate binding site; it reads SAD. Lys164 serves as the catalytic Nucleophile.

It belongs to the pseudouridine-5'-phosphate glycosidase family. As to quaternary structure, homotrimer. It depends on Mn(2+) as a cofactor.

The enzyme catalyses D-ribose 5-phosphate + uracil = psi-UMP + H2O. Its function is as follows. Catalyzes the reversible cleavage of pseudouridine 5'-phosphate (PsiMP) to ribose 5-phosphate and uracil. Functions biologically in the cleavage direction, as part of a pseudouridine degradation pathway. This Mesorhizobium japonicum (strain LMG 29417 / CECT 9101 / MAFF 303099) (Mesorhizobium loti (strain MAFF 303099)) protein is Pseudouridine-5'-phosphate glycosidase.